The following is a 62-amino-acid chain: Large ribosomal subunit protein bL28 (62 aa).

This sequence belongs to the bacterial ribosomal protein bL28 family.

This is Large ribosomal subunit protein bL28 from Aster yellows witches'-broom phytoplasma (strain AYWB).